The chain runs to 411 residues: MGRKKSCHVHNAPSDDDIMFSQDHKPKRIYQLWPGNNRFYCGGRLVFGPDASSLLLTTAMIGGPALTFCIRMVFLIGKRYPLFHSLILLGALLLTVLDFTFLFLTSSRDPGIIPRNKEAPEAEGLDMITQSSEWVNNKLGNTKIPRTKDILVNGYTVKVKFCDTCLLYRPPRASHCSICNNCVQRFDHHCPWVGQCIALRNYPYFICFISTSTLLCLYVFVFSWVSMLEVHGKMLLMVITNDLVFVVLILYCFVVVWFVGGLTVFHLYLICTNQTTYENFRYRYDKKENPYGKGLFKNLYELFFARIPPPMINFRDWAPEEPDEEVGSIASELDRTFGPRGDKYDMEMEIGGCKNSKVGLQLHTLEYDNNNSSEETVKKKGVSEETAAFYIPGIQEPANITRNSSIDVRSR.

2 consecutive transmembrane segments (helical) span residues leucine 56–isoleucine 76 and serine 85–threonine 105. In terms of domain architecture, DHHC spans lysine 160 to serine 210. The active-site S-palmitoyl cysteine intermediate is cysteine 190. Helical transmembrane passes span phenylalanine 205 to valine 225 and phenylalanine 245 to phenylalanine 265. Residue serine 405 is modified to Phosphoserine.

This sequence belongs to the DHHC palmitoyltransferase family. In terms of tissue distribution, expressed in flowers and pollen.

Its subcellular location is the cytoplasmic vesicle membrane. It carries out the reaction L-cysteinyl-[protein] + hexadecanoyl-CoA = S-hexadecanoyl-L-cysteinyl-[protein] + CoA. Its function is as follows. Palmitoyl acyltransferase. In Arabidopsis thaliana (Mouse-ear cress), this protein is Probable protein S-acyltransferase 2 (PAT02).